Here is a 218-residue protein sequence, read N- to C-terminus: Ribonuclease HII (218 aa).

In terms of domain architecture, RNase H type-2 spans 22–211 (VRIAGVDEAG…VRAALESRFS (190 aa)). Positions 28, 29, and 119 each coordinate a divalent metal cation.

Belongs to the RNase HII family. Mn(2+) is required as a cofactor. It depends on Mg(2+) as a cofactor.

It is found in the cytoplasm. The catalysed reaction is Endonucleolytic cleavage to 5'-phosphomonoester.. Its function is as follows. Endonuclease that specifically degrades the RNA of RNA-DNA hybrids. The sequence is that of Ribonuclease HII from Maricaulis maris (strain MCS10) (Caulobacter maris).